The chain runs to 402 residues: CCA-adding enzyme (402 aa).

2 residues coordinate ATP: G32 and R35. The CTP site is built by G32 and R35. Mg(2+)-binding residues include D45 and D47. ATP contacts are provided by R116, D159, R162, R165, and R168. CTP is bound by residues R116, D159, R162, R165, and R168.

The protein belongs to the tRNA nucleotidyltransferase/poly(A) polymerase family. Bacterial CCA-adding enzyme type 3 subfamily. Homodimer. It depends on Mg(2+) as a cofactor.

It carries out the reaction a tRNA precursor + 2 CTP + ATP = a tRNA with a 3' CCA end + 3 diphosphate. The enzyme catalyses a tRNA with a 3' CCA end + 2 CTP + ATP = a tRNA with a 3' CCACCA end + 3 diphosphate. Functionally, catalyzes the addition and repair of the essential 3'-terminal CCA sequence in tRNAs without using a nucleic acid template. Adds these three nucleotides in the order of C, C, and A to the tRNA nucleotide-73, using CTP and ATP as substrates and producing inorganic pyrophosphate. tRNA 3'-terminal CCA addition is required both for tRNA processing and repair. Also involved in tRNA surveillance by mediating tandem CCA addition to generate a CCACCA at the 3' terminus of unstable tRNAs. While stable tRNAs receive only 3'-terminal CCA, unstable tRNAs are marked with CCACCA and rapidly degraded. The sequence is that of CCA-adding enzyme from Streptococcus thermophilus (strain CNRZ 1066).